Consider the following 729-residue polypeptide: Phosphoribosylformylglycinamidine synthase subunit PurL (729 aa).

The active site involves His-54. Residues Tyr-57 and Lys-96 each coordinate ATP. Glu-98 lines the Mg(2+) pocket. Residues 99-102 (SHNH) and Arg-121 contribute to the substrate site. Catalysis depends on His-100, which acts as the Proton acceptor. Asp-122 is a binding site for Mg(2+). A substrate-binding site is contributed by Gln-245. Mg(2+) is bound at residue Asp-273. 317 to 319 (ETQ) contributes to the substrate binding site. Asp-495 and Gly-532 together coordinate ATP. Residue Asn-533 coordinates Mg(2+). Ser-535 contributes to the substrate binding site.

It belongs to the FGAMS family. In terms of assembly, monomer. Part of the FGAM synthase complex composed of 1 PurL, 1 PurQ and 2 PurS subunits.

The protein localises to the cytoplasm. The catalysed reaction is N(2)-formyl-N(1)-(5-phospho-beta-D-ribosyl)glycinamide + L-glutamine + ATP + H2O = 2-formamido-N(1)-(5-O-phospho-beta-D-ribosyl)acetamidine + L-glutamate + ADP + phosphate + H(+). The protein operates within purine metabolism; IMP biosynthesis via de novo pathway; 5-amino-1-(5-phospho-D-ribosyl)imidazole from N(2)-formyl-N(1)-(5-phospho-D-ribosyl)glycinamide: step 1/2. Functionally, part of the phosphoribosylformylglycinamidine synthase complex involved in the purines biosynthetic pathway. Catalyzes the ATP-dependent conversion of formylglycinamide ribonucleotide (FGAR) and glutamine to yield formylglycinamidine ribonucleotide (FGAM) and glutamate. The FGAM synthase complex is composed of three subunits. PurQ produces an ammonia molecule by converting glutamine to glutamate. PurL transfers the ammonia molecule to FGAR to form FGAM in an ATP-dependent manner. PurS interacts with PurQ and PurL and is thought to assist in the transfer of the ammonia molecule from PurQ to PurL. This Staphylococcus aureus (strain bovine RF122 / ET3-1) protein is Phosphoribosylformylglycinamidine synthase subunit PurL.